The sequence spans 504 residues: Hexokinase-10 (504 aa).

Residues 7 to 29 (GWVRVAAVGWAVAACAVAAGMVA) traverse the membrane as a helical segment. The Hexokinase domain occupies 39-493 (NRAVAVVRDL…SGTGAALLAA (455 aa)). The interval 94–226 (DGSEEGISYA…GLNMKVNVLV (133 aa)) is hexokinase small subdomain. G108 and T109 together coordinate ADP. T192, K193, N227, N254, E282, and E313 together coordinate D-glucose. The interval 227–482 (NNTVGTLALG…ATVSLRVMEE (256 aa)) is hexokinase large subdomain. G447 contributes to the ADP binding site.

Belongs to the hexokinase family. As to expression, expressed specifically in stamen.

The protein resides in the plastid. Its subcellular location is the chloroplast outer membrane. It catalyses the reaction a D-hexose + ATP = a D-hexose 6-phosphate + ADP + H(+). The enzyme catalyses D-fructose + ATP = D-fructose 6-phosphate + ADP + H(+). The catalysed reaction is D-glucose + ATP = D-glucose 6-phosphate + ADP + H(+). It functions in the pathway carbohydrate metabolism; hexose metabolism. It participates in carbohydrate degradation; glycolysis; D-glyceraldehyde 3-phosphate and glycerone phosphate from D-glucose: step 1/4. In terms of biological role, fructose and glucose phosphorylating enzyme. This Oryza sativa subsp. japonica (Rice) protein is Hexokinase-10 (HXK10).